The primary structure comprises 367 residues: MKNEYLLLTPGPLSTSETVREAMLKDWCTWDDEYNKDIVEVIRTKLVKLATKHSGYTSVLMQGSGTASVEATIGSAIGKEGKLLVVDNGAYGARIAQIAAYLNIPCHVVSPGETSQPHLNEVETALASDPAITHVAIVHCETTTGMLNPIEAFASVAKAHGKVVILDAMSSFGGIPIDIAELGIDFMISSANKCIQGVPGFGFVIAKQTELEKCQGQARSLSLDLYDQWHCMEVNHGKWRFTSPTHTVRAFYQALLELEQEGGIEARHNRYQTNQKTLVAGMRSLGFEPLLSDDLHSPIITSFYSPTHSDYQFKAFYTRLKEQGFVIYPGKVSNADCFRIGNIGEVYPADIERLIGAIEKAMYWQVA.

At K193 the chain carries N6-(pyridoxal phosphate)lysine.

This sequence belongs to the class-V pyridoxal-phosphate-dependent aminotransferase family. PhnW subfamily. As to quaternary structure, homodimer. The cofactor is pyridoxal 5'-phosphate.

It carries out the reaction (2-aminoethyl)phosphonate + pyruvate = phosphonoacetaldehyde + L-alanine. Its function is as follows. Involved in phosphonate degradation. In Vibrio vulnificus (strain YJ016), this protein is 2-aminoethylphosphonate--pyruvate transaminase.